The sequence spans 489 residues: Mitochondrial distribution and morphology protein 10 (489 aa).

Belongs to the MDM10 family. In terms of assembly, component of the ER-mitochondria encounter structure (ERMES) or MDM complex, composed of MMM1, MDM10, MDM12 and MDM34. Associates with the mitochondrial outer membrane sorting assembly machinery SAM(core) complex.

The protein resides in the mitochondrion outer membrane. Its function is as follows. Component of the ERMES/MDM complex, which serves as a molecular tether to connect the endoplasmic reticulum and mitochondria. Components of this complex are involved in the control of mitochondrial shape and protein biogenesis and may function in phospholipid exchange. MDM10 is involved in the late assembly steps of the general translocase of the mitochondrial outer membrane (TOM complex). Functions in the TOM40-specific route of the assembly of outer membrane beta-barrel proteins, including the association of TOM40 with the receptor TOM22 and small TOM proteins. Can associate with the SAM(core) complex as well as the MDM12-MMM1 complex, both involved in late steps of the major beta-barrel assembly pathway, that is responsible for biogenesis of all outer membrane beta-barrel proteins. May act as a switch that shuttles between both complexes and channels precursor proteins into the TOM40-specific pathway. Plays a role in mitochondrial morphology and in the inheritance of mitochondria. The sequence is that of Mitochondrial distribution and morphology protein 10 from Arthroderma otae (strain ATCC MYA-4605 / CBS 113480) (Microsporum canis).